The primary structure comprises 446 residues: MAVTITWVKARQIFDSRGNPTVEVDVGLSDGSYARGAVPSGASTGIYEALELRDGGSDYLGKGVLKAVSNVNNIIGPAIVGKDPTEQVEIDNFMVQQLDGTSNEWGWCKQKLGANAILAVSLAVCKAGAMVKKIPLYQHIANLAGNKTLVLPVPAFNVINGGSHAGNKLAMQEFMILPTGASSFKEAMKMGVEVYHNLKSIIKKKYGQDATNVGDEGGFAPNIQENKEGLELLKAAIEKAGYTGKVVIGMDVAASEFFGEKDKTYDLNFKEENNDGSNKISGDSLKDLYKSFVSEYPIESIEDPFDQDDWSTYAKLTDEIGQKVQIVGDDLLVTNPTRVAKAINEKTCNALLLKVNQIGSVTESIEAVRMSKRAGWGVMASHRSGETEDTFIADLSVGLSTGQIKTGAPCRSERLAKYNQLLRIEEELGDAAVYAGAKFRAPVEPY.

Residues His-164 and Glu-173 each contribute to the substrate site. Glu-216 (proton donor) is an active-site residue. Mg(2+)-binding residues include Asp-251, Glu-302, and Asp-329. Substrate contacts are provided by Glu-302 and Asp-329. Residue Lys-354 is the Proton acceptor of the active site. Residues Ser-381 to Ser-384 and Lys-405 each bind substrate.

The protein belongs to the enolase family. In terms of assembly, homodimer. The cofactor is Mg(2+).

It is found in the cytoplasm. It catalyses the reaction (2R)-2-phosphoglycerate = phosphoenolpyruvate + H2O. It functions in the pathway carbohydrate degradation; glycolysis; pyruvate from D-glyceraldehyde 3-phosphate: step 4/5. The polypeptide is Enolase 1 (ENO1) (Zea mays (Maize)).